Consider the following 116-residue polypeptide: Iron-sulfur cluster insertion protein ErpA (116 aa).

Residues C44, C108, and C110 each contribute to the iron-sulfur cluster site.

Belongs to the HesB/IscA family. Homodimer. Iron-sulfur cluster serves as cofactor.

In terms of biological role, required for insertion of 4Fe-4S clusters for at least IspG. This chain is Iron-sulfur cluster insertion protein ErpA, found in Shewanella putrefaciens (strain CN-32 / ATCC BAA-453).